Reading from the N-terminus, the 216-residue chain is Flagellar transcriptional regulator FlhC (216 aa).

Residues C137, C140, C157, and C160 each contribute to the Zn(2+) site.

The protein belongs to the FlhC family. As to quaternary structure, heterohexamer composed of two FlhC and four FlhD subunits. Each FlhC binds a FlhD dimer, forming a heterotrimer, and a hexamer assembles by dimerization of two heterotrimers. Requires Zn(2+) as cofactor.

Its subcellular location is the cytoplasm. In terms of biological role, functions in complex with FlhD as a master transcriptional regulator that regulates transcription of several flagellar and non-flagellar operons by binding to their promoter region. Activates expression of class 2 flagellar genes, including fliA, which is a flagellum-specific sigma factor that turns on the class 3 genes. Also regulates genes whose products function in a variety of physiological pathways. The protein is Flagellar transcriptional regulator FlhC of Paraburkholderia atlantica.